The following is a 414-amino-acid chain: Ankyrin repeat domain-containing protein 10 (414 aa).

ANK repeat units lie at residues 18–47 (TLRF…RSDL), 54–83 (YGWT…SVNA), 88–117 (FAQT…NINK), 121–150 (VGET…QIDL), and 154–187 (SGLT…RYYS). The segment at 310–332 (GVTSPSRHRIHTSNGTEEPEKAM) is disordered.

This Gallus gallus (Chicken) protein is Ankyrin repeat domain-containing protein 10 (ANKRD10).